The primary structure comprises 89 residues: UPF0213 protein LSEI_1587 (89 aa).

The 76-residue stretch at 4-79 folds into the GIY-YIG domain; that stretch reads KTYYFYVLLC…KHQTRHRKEV (76 aa).

The protein belongs to the UPF0213 family.

This chain is UPF0213 protein LSEI_1587, found in Lacticaseibacillus paracasei (strain ATCC 334 / BCRC 17002 / CCUG 31169 / CIP 107868 / KCTC 3260 / NRRL B-441) (Lactobacillus paracasei).